Reading from the N-terminus, the 206-residue chain is Probable GTP-binding protein EngB (206 aa).

Residues 23 to 197 (QGIEVAFAGR…ERVLDKWFGY (175 aa)) enclose the EngB-type G domain. Residues 31–38 (GRSNAGKS), 58–62 (GRTQL), 76–79 (DLPG), 143–146 (TKAD), and 176–178 (FSS) contribute to the GTP site. Positions 38 and 60 each coordinate Mg(2+).

The protein belongs to the TRAFAC class TrmE-Era-EngA-EngB-Septin-like GTPase superfamily. EngB GTPase family. Requires Mg(2+) as cofactor.

Functionally, necessary for normal cell division and for the maintenance of normal septation. This chain is Probable GTP-binding protein EngB, found in Pseudoalteromonas atlantica (strain T6c / ATCC BAA-1087).